We begin with the raw amino-acid sequence, 326 residues long: tRNA uridine(34) hydroxylase (326 aa).

Positions 123 to 217 constitute a Rhodanese domain; sequence SDPDVLLVDT…YLEEVPEENS (95 aa). The Cysteine persulfide intermediate role is filled by C177. Over residues 276 to 320 the composition is skewed to basic and acidic residues; that stretch reads EEQKSRFREREKQVQLANERGETHVGGDAAKLIEQRKQEKKEKKQ. The interval 276–326 is disordered; that stretch reads EEQKSRFREREKQVQLANERGETHVGGDAAKLIEQRKQEKKEKKQQQRSSK.

Belongs to the TrhO family.

The catalysed reaction is uridine(34) in tRNA + AH2 + O2 = 5-hydroxyuridine(34) in tRNA + A + H2O. Catalyzes oxygen-dependent 5-hydroxyuridine (ho5U) modification at position 34 in tRNAs. The polypeptide is tRNA uridine(34) hydroxylase (Aliivibrio salmonicida (strain LFI1238) (Vibrio salmonicida (strain LFI1238))).